We begin with the raw amino-acid sequence, 177 residues long: 3-isopropylmalate dehydratase small subunit 1 (177 aa).

The segment at Gly-157–Glu-177 is disordered. Low complexity predominate over residues Glu-162 to Glu-177.

It belongs to the LeuD family. LeuD type 2 subfamily. Heterodimer of LeuC and LeuD.

The catalysed reaction is (2R,3S)-3-isopropylmalate = (2S)-2-isopropylmalate. It functions in the pathway amino-acid biosynthesis; L-leucine biosynthesis; L-leucine from 3-methyl-2-oxobutanoate: step 2/4. Its function is as follows. Catalyzes the isomerization between 2-isopropylmalate and 3-isopropylmalate, via the formation of 2-isopropylmaleate. The sequence is that of 3-isopropylmalate dehydratase small subunit 1 (leuD1) from Deinococcus radiodurans (strain ATCC 13939 / DSM 20539 / JCM 16871 / CCUG 27074 / LMG 4051 / NBRC 15346 / NCIMB 9279 / VKM B-1422 / R1).